Consider the following 185-residue polypeptide: Ribosome-recycling factor (185 aa).

It belongs to the RRF family.

The protein localises to the cytoplasm. Functionally, responsible for the release of ribosomes from messenger RNA at the termination of protein biosynthesis. May increase the efficiency of translation by recycling ribosomes from one round of translation to another. This chain is Ribosome-recycling factor, found in Azotobacter vinelandii (strain DJ / ATCC BAA-1303).